The primary structure comprises 218 residues: ETS domain-containing protein ets-7 (218 aa).

Positions 12–93 (QRLLNFLRGL…KGKDSRYCFL (82 aa)) form a DNA-binding region, ETS. The span at 131–161 (TSNFSLQSSPSSSSNSSSARTMSATSSPTSS) shows a compositional bias: low complexity. Residues 131-162 (TSNFSLQSSPSSSSNSSSARTMSATSSPTSSL) form a disordered region.

The protein belongs to the ETS family.

It is found in the nucleus. Functionally, probable transcription factor. Involved in responses to oxidative stress. The polypeptide is ETS domain-containing protein ets-7 (Caenorhabditis elegans).